The following is a 321-amino-acid chain: MKLLALLSLLILMLQEARTASLSEEREGDPYAILHLGDYVLSLDNYDEVIDPSNYDELIDYGDQLPQVKGTSLASLTRTRFTQSTEAARTLPSNPTTARPPTLGLLAAPANHGLPTCLICVCLGSSVYCDDADLENIPPLPQTTAYLYARFNRISHIRAGDFKGLTKLKRIDLSGNSISSIDDKALRLLPALRDLILPENKLVALPTLPTSIEVLDVRMNRLQSSGIQPEAFRALEKLQFLYLADNLLDAIPPSLPLSLRSLHLQNNMIETMQRDAFCDAEEHRHTRRPLEDIRLDGNPINLSLFPSAYFCLPRLPTGRFV.

The N-terminal stretch at 1-19 (MKLLALLSLLILMLQEART) is a signal peptide. Residue Tyr61 is modified to Sulfotyrosine. The 38-residue stretch at 105-142 (LLAAPANHGLPTCLICVCLGSSVYCDDADLENIPPLPQ) folds into the LRRNT domain. LRR repeat units lie at residues 143–164 (TTAY…DFKG), 167–188 (KLKR…ALRL), 191–212 (ALRD…PTSI), 237–258 (KLQF…LPLS), 259–279 (LRSL…AFCD), and 289–309 (PLED…PSAY). The cysteines at positions 278 and 311 are disulfide-linked. Asn301 is a glycosylation site (N-linked (GlcNAc...) asparagine).

Belongs to the small leucine-rich proteoglycan (SLRP) family. SLRP class III subfamily. In terms of assembly, homodimer. O-glycosylated (sialylated oligosaccharides). In terms of processing, sulfated on tyrosine residues. Post-translationally, proteolytically cleaved by MMP1, MMP2, MMP3, MMP7, MMP8, MMP9, ADAMTS4, and ADAMTS5. Proteolytically cleaved by MMP13.

Its subcellular location is the secreted. The protein resides in the extracellular space. It localises to the extracellular matrix. Functionally, inhibits angiogenesis in the vitreous humor of the eye, and therefore represses neovascularization. Binds collagen fibrils. May be involved in collagen fiber organization via regulation of other members of the small leucine-rich repeat proteoglycan superfamily. The polypeptide is Opticin (OPTC) (Bos taurus (Bovine)).